The sequence spans 411 residues: MLLTVFCAPRDRSETTFALDVSPELELRDFLALCELESGIPAGEIQIIYAEQPLQDPTRALGNYGLKDGDVLVLRQAERLRAPPQPTVPGLPRIDFSSIAVPGTSSGQNRNRPQQAQRPSTTQPPPPQATTSPGSGVSPQGLDNPALLRDMLLANPHELSLLKERNPPLAEALLSGDLERFTKVLMEQQQDRARRDQERIKLLTADPFDLDAQAKIEEEIRQHNIEENMTIAMEEAPESFGQVVMLYINCKVNGHPVKAFVDSGAQMTIMSQACAERCNIMRLVDRRWAGIAKGVGTQKIIGRVHLAQVQIEGDFLPCSFSILEDQPMDMLLGLDMLKRHQCSIDLKKNVLLIGTTGTETRFLPEAELPECARLAYGPEGREEPRPDEIADRELAEAIQRSVQDSGKMHDM.

Residues 1–81 form the Ubiquitin-like domain; it reads MLLTVFCAPR…LVLRQAERLR (81 aa). Positions 82 to 144 are disordered; sequence APPQPTVPGL…SGVSPQGLDN (63 aa). The span at 108–121 shows a compositional bias: low complexity; sequence QNRNRPQQAQRPST. Residue aspartate 262 is part of the active site. The Ubiquitin-binding motif lies at 387–406; it reads DEIADRELAEAIQRSVQDSG.

Belongs to the DDI1 family. Homodimer.

The protein localises to the cytoplasm. It is found in the cytosol. Its subcellular location is the chromosome. Aspartic protease that mediates the cleavage of NFE2L1/NRF1 at 'Leu-104', thereby promoting release of NFE2L1/NRF1 from the endoplasmic reticulum membrane. Ubiquitination of NFE2L1/NRF1 is a prerequisite for cleavage, suggesting that DDI2 specifically recognizes and binds ubiquitinated NFE2L1/NRF1. Seems to act as a proteasomal shuttle which links the proteasome and replication fork proteins like RTF2. Required for cellular survival following replication stress. The polypeptide is Protein DDI1 homolog 2 (ddi2) (Danio rerio (Zebrafish)).